A 122-amino-acid polypeptide reads, in one-letter code: MSLTNEQLIEAIASKSVSEIVELIAAMEEKFGVSAAAAVAAAPAAGAAAAEEKTEFDVILAEAGANKVAVIKAVRGATGLGLKEAKDLVESAPAALKEGISKPEAEALKKELEEAGAKVEIK.

This sequence belongs to the bacterial ribosomal protein bL12 family. In terms of assembly, homodimer. Part of the ribosomal stalk of the 50S ribosomal subunit. Forms a multimeric L10(L12)X complex, where L10 forms an elongated spine to which 2 to 4 L12 dimers bind in a sequential fashion. Binds GTP-bound translation factors.

In terms of biological role, forms part of the ribosomal stalk which helps the ribosome interact with GTP-bound translation factors. Is thus essential for accurate translation. The sequence is that of Large ribosomal subunit protein bL12 from Actinobacillus pleuropneumoniae serotype 5b (strain L20).